The sequence spans 206 residues: Two-component response regulator ARR15 (206 aa).

Residues His-19–Met-146 form the Response regulatory domain. Residue Asp-79 is modified to 4-aspartylphosphate. A disordered region spans residues Ala-151–Gly-206. Residues Asp-168–Val-187 are compositionally biased toward low complexity.

Belongs to the ARR family. Type-A subfamily. In terms of processing, two-component system major event consists of a His-to-Asp phosphorelay between a sensor histidine kinase (HK) and a response regulator (RR). In plants, the His-to-Asp phosphorelay involves an additional intermediate named Histidine-containing phosphotransfer protein (HPt). This multistep phosphorelay consists of a His-Asp-His-Asp sequential transfer of a phosphate group between first a His and an Asp of the HK protein, followed by the transfer to a conserved His of the HPt protein and finally the transfer to an Asp in the receiver domain of the RR protein.

The protein resides in the nucleus. Its function is as follows. Functions as a response regulator involved in His-to-Asp phosphorelay signal transduction system. Phosphorylation of the Asp residue in the receiver domain activates the ability of the protein to promote the transcription of target genes. Type-A response regulators seem to act as negative regulators of the cytokinin signaling. This Arabidopsis thaliana (Mouse-ear cress) protein is Two-component response regulator ARR15 (ARR15).